The chain runs to 335 residues: 2-acylglycerol O-acyltransferase 1 (335 aa).

Transmembrane regions (helical) follow at residues 18 to 38 and 40 to 60; these read TVAV…SIGI and VMLI…WLYF. Residues asparagine 121 and asparagine 125 are each glycosylated (N-linked (GlcNAc...) asparagine). Residues 132-152 form a helical membrane-spanning segment; the sequence is LFPGFTSYLHVLPLWFWCPVF. N-linked (GlcNAc...) asparagine glycosylation is present at asparagine 180.

The protein belongs to the diacylglycerol acyltransferase family. In terms of tissue distribution, expressed in stomach and liver.

It localises to the endoplasmic reticulum membrane. It carries out the reaction a 2-acylglycerol + an acyl-CoA = a 1,2-diacylglycerol + CoA. It catalyses the reaction 2-(9Z-octadecenoyl)-glycerol + butanoyl-CoA = 1-butanoyl-2-(9Z-octadecenoyl)-glycerol + CoA. The enzyme catalyses 2-(9Z-octadecenoyl)-glycerol + octanoyl-CoA = 1-octanoyl-2-(9Z-octadecenoyl)-glycerol + CoA. The catalysed reaction is 2-(9Z-octadecenoyl)-glycerol + dodecanoyl-CoA = 1-dodecanoyl-2-(9Z-octadecenoyl)-glycerol + CoA. It carries out the reaction 2-(9Z-octadecenoyl)-glycerol + tetradecanoyl-CoA = 1-tetradecanoyl-2-(9Z-octadecenoyl)-glycerol + CoA. It catalyses the reaction 2-(9Z-octadecenoyl)-glycerol + hexadecanoyl-CoA = 1-hexadecanoyl-2-(9Z-octadecenoyl)-glycerol + CoA. The enzyme catalyses 2-(9Z-octadecenoyl)-glycerol + octadecanoyl-CoA = 1-octadecanoyl-2-(9Z-octadecenoyl)-glycerol + CoA. The catalysed reaction is eicosanoyl-CoA + 2-(9Z-octadecenoyl)-glycerol = 1-eicosanoyl-2-(9Z-octadecenoyl)-glycerol + CoA. It carries out the reaction 2-(9Z-octadecenoyl)-glycerol + (9Z)-octadecenoyl-CoA = 1,2-di-(9Z-octadecenoyl)-glycerol + CoA. It catalyses the reaction 2-(9Z-octadecenoyl)-glycerol + (9Z,12Z)-octadecadienoyl-CoA = 1-(9Z,12Z-octadecadienoyl)-2-(9Z-octadecenoyl)-glycerol + CoA. The enzyme catalyses 2-(9Z-octadecenoyl)-glycerol + (5Z,8Z,11Z,14Z)-eicosatetraenoyl-CoA = 1-(5Z,8Z,11Z,14Z-eicosatetraenoyl)-2-(9Z-octadecenoyl)-glycerol + CoA. The catalysed reaction is a 2-acylglycerol + an acyl-CoA = a 1,2-diacyl-sn-glycerol + CoA. It carries out the reaction a 2-acylglycerol + an acyl-CoA = a 2,3-diacyl-sn-glycerol + CoA. It catalyses the reaction a 1-acylglycerol + an acyl-CoA = a 1,2-diacylglycerol + CoA. The enzyme catalyses 1-dodecanoylglycerol + (9Z)-octadecenoyl-CoA = 1-dodecanoyl-2-(9Z-octadecenoyl)-glycerol + CoA. The catalysed reaction is 1-tetradecanoylglycerol + (9Z)-octadecenoyl-CoA = 1-tetradecanoyl-2-(9Z-octadecenoyl)-glycerol + CoA. It carries out the reaction 1-hexadecanoylglycerol + (9Z)-octadecenoyl-CoA = 1-hexadecanoyl-2-(9Z-octadecenoyl)-glycerol + CoA. It catalyses the reaction 1-(9Z-octadecenoyl)-glycerol + (9Z)-octadecenoyl-CoA = 1,2-di-(9Z-octadecenoyl)-glycerol + CoA. The enzyme catalyses 1-(9Z,12Z-octadecadienoyl)-glycerol + (9Z)-octadecenoyl-CoA = 1-(9Z,12Z-octadecadienoyl)-2-(9Z-octadecenoyl)-glycerol + CoA. The catalysed reaction is 1-(9Z,12Z,15Z-octadecatrienoyl)-glycerol + (9Z)-octadecenoyl-CoA = 1-(9Z,12Z,15Z-octadecatrienoyl)-2-(9Z-octadecenoyl)-glycerol + CoA. It carries out the reaction 1-(5Z,8Z,11Z,14Z-eicosatetraenoyl)-glycerol + (9Z)-octadecenoyl-CoA = 1-(5Z,8Z,11Z,14Z-eicosatetraenoyl)-2-(9Z-octadecenoyl)-glycerol + CoA. It catalyses the reaction a 1-acylglycerol + an acyl-CoA = a 1,3-diacylglycerol + CoA. The enzyme catalyses 1-dodecanoylglycerol + (9Z)-octadecenoyl-CoA = 1-dodecanoyl-3-(9Z-octadecenoyl)-glycerol + CoA. The catalysed reaction is 1-hexadecanoylglycerol + (9Z)-octadecenoyl-CoA = 1-(9Z-octadecenoyl)-3-hexadecanoylglycerol + CoA. It carries out the reaction 1-octadecanoylglycerol + (9Z)-octadecenoyl-CoA = 1-octadecanoyl-3-(9Z-octadecenoyl)-glycerol + CoA. It catalyses the reaction 1-(9Z-octadecenoyl)-sn-glycerol + (9Z)-octadecenoyl-CoA = 1,3-di-(9Z-octadecenoyl)-glycerol + CoA. The enzyme catalyses 1-(9Z,12Z-octadecadienoyl)-glycerol + (9Z)-octadecenoyl-CoA = 1-(9Z-octadecenoyl)-3-(9Z,12Z-octadecadienoyl)-glycerol + CoA. The catalysed reaction is 1-(9Z,12Z,15Z-octadecatrienoyl)-glycerol + (9Z)-octadecenoyl-CoA = 1-(9Z,12Z,15Z-octadecatrienoyl)-3-(9Z-octadecenoyl)-glycerol + CoA. It carries out the reaction a 1-acyl-sn-glycerol + an acyl-CoA = a 1,3-diacyl-sn-glycerol + CoA. It catalyses the reaction a 3-acyl-sn-glycerol + an acyl-CoA = a 1,3-diacyl-sn-glycerol + CoA. The enzyme catalyses 3-octadecanoyl-sn-glycerol + (9Z)-octadecenoyl-CoA = 1-(9Z-octadecenoyl)-3-octadecanoyl-sn-glycerol + CoA. The protein operates within glycerolipid metabolism; triacylglycerol biosynthesis. Functionally, involved in glycerolipid synthesis and lipid metabolism. Catalyzes the formation of diacylglycerol, the precursor of triacylglycerol, by transferring the acyl chain of a fatty acyl-CoA to a monoacylglycerol, mainly at the sn-1 or sn-3 positions. It uses both sn-2-monoacylglycerol (2-acylglycerol) and sn-1-monoacylglycerol (1-acyl-sn-glycerol) equally well as substrates, and uses sn-3-monoacylglycerol (3-acyl-sn-glycerol) with lower efficiency. Probably not involved in absorption of dietary fat in the small intestine. This Homo sapiens (Human) protein is 2-acylglycerol O-acyltransferase 1.